Consider the following 171-residue polypeptide: Neudesin (171 aa).

The N-terminal stretch at 1–30 (MARPAPWWRLRLLAALVLALALVPVPSAWA) is a signal peptide. In terms of domain architecture, Cytochrome b5 heme-binding spans 43 to 128 (VRLFTEEELA…KELEALDDVF (86 aa)). An N6-acetyllysine modification is found at Lys135.

This sequence belongs to the cytochrome b5 family. MAPR subfamily. In terms of assembly, interacts with PINK1 and PARK7. In the embryo, expressed most abundantly in brain and spinal cord. Widely expressed in adult tissues including brain, heart, lung and kidney. In brain, expressed in neurons but not in glial cells. In the hypothalamus is expressed primarily in the paraventricular nucleus (PVN), with lower levels of expression in the arcuate nucleus (ARC).

Its subcellular location is the secreted. The protein resides in the extracellular space. It localises to the mitochondrion. It is found in the endoplasmic reticulum. In terms of biological role, acts as a neurotrophic factor in postnatal mature neurons, enhancing neuronal survival. Promotes cell proliferation and neurogenesis in undifferentiated neural pro-genitor cells at the embryonic stage and inhibits differentiation of astrocytes. Its neurotrophic activity is exerted via MAPK1/ERK2, MAPK3/ERK1 and AKT1/AKT pathways. Neurotrophic activity is enhanced by binding to heme. Also acts as an anorexigenic neurotrophic factor that contributes to energy balance. In Mus musculus (Mouse), this protein is Neudesin.